The primary structure comprises 1372 residues: DNA-directed RNA polymerase subunit beta (1372 aa).

The protein belongs to the RNA polymerase beta chain family. In terms of assembly, the RNAP catalytic core consists of 2 alpha, 1 beta, 1 beta' and 1 omega subunit. When a sigma factor is associated with the core the holoenzyme is formed, which can initiate transcription.

The catalysed reaction is RNA(n) + a ribonucleoside 5'-triphosphate = RNA(n+1) + diphosphate. In terms of biological role, DNA-dependent RNA polymerase catalyzes the transcription of DNA into RNA using the four ribonucleoside triphosphates as substrates. The sequence is that of DNA-directed RNA polymerase subunit beta from Nitratidesulfovibrio vulgaris (strain DP4) (Desulfovibrio vulgaris).